Reading from the N-terminus, the 156-residue chain is MNLNATLFAQMVVFLVLAWFTMKFVWPPLINALDERSKKIADGLAAAEKGKAELEAAHKRVDQELAQARNDGQQRIADAEKRAQAVAEEIKANAQAEAARIVAQAKAEAEQQIVKAREALRGEVAALAVKGAEQILKREVDQTAHAQLLNQLKAEL.

Residues 7–29 (LFAQMVVFLVLAWFTMKFVWPPL) form a helical membrane-spanning segment.

It belongs to the ATPase B chain family. In terms of assembly, F-type ATPases have 2 components, F(1) - the catalytic core - and F(0) - the membrane proton channel. F(1) has five subunits: alpha(3), beta(3), gamma(1), delta(1), epsilon(1). F(0) has three main subunits: a(1), b(2) and c(10-14). The alpha and beta chains form an alternating ring which encloses part of the gamma chain. F(1) is attached to F(0) by a central stalk formed by the gamma and epsilon chains, while a peripheral stalk is formed by the delta and b chains.

Its subcellular location is the cell inner membrane. Its function is as follows. F(1)F(0) ATP synthase produces ATP from ADP in the presence of a proton or sodium gradient. F-type ATPases consist of two structural domains, F(1) containing the extramembraneous catalytic core and F(0) containing the membrane proton channel, linked together by a central stalk and a peripheral stalk. During catalysis, ATP synthesis in the catalytic domain of F(1) is coupled via a rotary mechanism of the central stalk subunits to proton translocation. Component of the F(0) channel, it forms part of the peripheral stalk, linking F(1) to F(0). This Burkholderia multivorans (strain ATCC 17616 / 249) protein is ATP synthase subunit b.